The following is a 270-amino-acid chain: Fibroblast growth factor 5 (270 aa).

Positions 1-20 (MSLSLLLLLFLSHLILSAWA) are cleaved as a signal peptide. The interval 26–84 (LAPKGQPGPAATGRNPGGAGGSSTSGGTTSSSSSSVSSAPGASPGIRGSGSEQGSFQWS) is disordered. Gly residues predominate over residues 40 to 49 (NPGGAGGSST). Positions 50–70 (SGGTTSSSSSSVSSAPGASPG) are enriched in low complexity. The span at 75–84 (GSEQGSFQWS) shows a compositional bias: polar residues. N-linked (GlcNAc...) asparagine glycosylation occurs at asparagine 112. The tract at residues 237-257 (EKKKPPSHVKPKVPLSAPRKS) is disordered.

Belongs to the heparin-binding growth factors family. Interacts with FGFR1 and FGFR2. Affinity between fibroblast growth factors (FGFs) and their receptors is increased by heparan sulfate glycosaminoglycans that function as coreceptors.

Its subcellular location is the secreted. Functionally, plays an important role in the regulation of cell proliferation and cell differentiation. Required for normal regulation of the hair growth cycle. Functions as an inhibitor of hair elongation by promoting progression from anagen, the growth phase of the hair follicle, into catagen the apoptosis-induced regression phase. This is Fibroblast growth factor 5 (FGF5) from Canis lupus familiaris (Dog).